Reading from the N-terminus, the 328-residue chain is Probable ABC transporter permease YtrC (328 aa).

8 helical membrane-spanning segments follow: residues 16–36 (VVILLSIAFLVLANPLSIVNT), 60–80 (ISNLIDINWVPGVILAVCFLG), 110–130 (GFVIVLSQLIGFLLAWLLILV), 144–164 (IGVIVISFMAFSLVMAAGALT), 167–187 (AFAQLLTAFSAAILPYLIIAL), 236–256 (YLLLIPAVMSMLFYLIGFISF), 277–297 (VQILVMAFGILGFGLFGYYTG), and 300–320 (IIGYILGMIIGAVAGFFVSYF).

It belongs to the ABC-5 integral membrane protein family. In terms of assembly, the complex is composed of 2 ATP-binding proteins (YtrB and YtrE), 2 transmembrane proteins (YtrC and YtrD) and a solute-binding protein (YtrF).

Its subcellular location is the cell membrane. Functionally, part of the ABC transporter complex YtrBCDEF that plays a role in acetoin utilization during stationary phase and sporulation. The protein is Probable ABC transporter permease YtrC (ytrC) of Bacillus subtilis (strain 168).